A 547-amino-acid polypeptide reads, in one-letter code: Isoflavonoid 7-O-beta-apiosyl-glucoside beta-glycosidase (547 aa).

The N-terminal stretch at 1–31 is a signal peptide; it reads MHAMTFKAILLLGLLALVSTSASIAFAKEVR. Gln-59 provides a ligand contact to a beta-D-glucoside. N-linked (GlcNAc...) asparagine glycosylation is found at Asn-72 and Asn-132. His-159 is an a beta-D-glucoside binding site. Asn-175 carries N-linked (GlcNAc...) asparagine glycosylation. 204 to 205 serves as a coordination point for a beta-D-glucoside; sequence NE. The active-site Proton donor is Glu-205. Cys-224 and Cys-232 are joined by a disulfide. Residue Asn-285 is glycosylated (N-linked (GlcNAc...) asparagine). Residues Tyr-348, Glu-419, Trp-468, 475-476, and Phe-484 each bind a beta-D-glucoside; that span reads EW. The active-site Nucleophile is the Glu-419. Residue Asn-490 is glycosylated (N-linked (GlcNAc...) asparagine).

The protein belongs to the glycosyl hydrolase 1 family. In terms of assembly, homotetramer.

It catalyses the reaction 7-[beta-D-apiofuranosyl-(1-&gt;6)-beta-D-glucopyranosyloxy]isoflavonoid + H2O = a 7-hydroxyisoflavonoid + beta-D-apiofuranosyl-(1-&gt;6)-D-glucose.. Not inhibited by iron, calcium, mercury, manganese, zinc or EDTA. Functionally, hydrolyzes dalpatein 7-O-beta-D-apiofuranosyl-(1-&gt;6)-beta-D-glucopyranoside and dalnigrein 7-O-beta-D-apiofuranosyl-(1-&gt;6)-beta-D-glucopyranoside. Also has activity towards pNP-beta-D-fucoside and pNP-beta-D-glucoside, but not pNP-beta-cellobioside. The sequence is that of Isoflavonoid 7-O-beta-apiosyl-glucoside beta-glycosidase from Dalbergia nigrescens (Thai blackwood).